The primary structure comprises 196 residues: Peptide deformylase (196 aa).

The Fe cation site is built by Cys-97 and His-139. The active site involves Glu-140. His-143 lines the Fe cation pocket. Basic and acidic residues predominate over residues 171–187; that stretch reads LDAQEPKRAPHSPHTDA. The segment at 171–196 is disordered; sequence LDAQEPKRAPHSPHTDAQKPGAASDL.

Belongs to the polypeptide deformylase family. It depends on Fe(2+) as a cofactor.

The enzyme catalyses N-terminal N-formyl-L-methionyl-[peptide] + H2O = N-terminal L-methionyl-[peptide] + formate. Removes the formyl group from the N-terminal Met of newly synthesized proteins. Requires at least a dipeptide for an efficient rate of reaction. N-terminal L-methionine is a prerequisite for activity but the enzyme has broad specificity at other positions. The sequence is that of Peptide deformylase from Methylocella silvestris (strain DSM 15510 / CIP 108128 / LMG 27833 / NCIMB 13906 / BL2).